Here is a 113-residue protein sequence, read N- to C-terminus: Flagellar transcriptional regulator FlhD (113 aa).

The protein belongs to the FlhD family. As to quaternary structure, homodimer; disulfide-linked. Forms a heterohexamer composed of two FlhC and four FlhD subunits. Each FlhC binds a FlhD dimer, forming a heterotrimer, and a hexamer assembles by dimerization of two heterotrimers.

It localises to the cytoplasm. Its function is as follows. Functions in complex with FlhC as a master transcriptional regulator that regulates transcription of several flagellar and non-flagellar operons by binding to their promoter region. Activates expression of class 2 flagellar genes, including fliA, which is a flagellum-specific sigma factor that turns on the class 3 genes. Also regulates genes whose products function in a variety of physiological pathways. This chain is Flagellar transcriptional regulator FlhD, found in Salmonella typhi.